The primary structure comprises 486 residues: Receptor-interacting serine/threonine-protein kinase 3 (486 aa).

The residue at position 2 (Ser-2) is a Phosphoserine. The region spanning 22–292 is the Protein kinase domain; that stretch reads LKKLEFVGKG…DCEPKTNEVY (271 aa). ATP is bound by residues 28 to 36 and Lys-51; that span reads VGKGGFGVV. The active-site Proton acceptor is Asp-143. The residue at position 165 (Ser-165) is a Phosphoserine. At Thr-187 the chain carries Phosphothreonine. At Ser-204 the chain carries Phosphoserine; by autocatalysis. Phosphothreonine; by autocatalysis is present on Thr-231. Ser-232 is modified (phosphoserine; by autocatalysis). The residue at position 257 (Thr-257) is a Phosphothreonine. 2 positions are modified to phosphoserine: Ser-304 and Ser-326. Positions 312–333 are disordered; sequence QHRSSGRNLSAREPSQRGTEMD. The residue at position 338 (Thr-338) is a Phosphothreonine. Residues 349-388 are disordered; the sequence is LEEPSGPVPGKCPERQAQDTSVGPATPARTSSDPVAGTPQ. Residues Ser-353, Ser-369, and Ser-380 each carry the phosphoserine modification. Over residues 366–381 the composition is skewed to polar residues; it reads QDTSVGPATPARTSSD. Thr-392 carries the phosphothreonine modification. The RIP homotypic interaction motif (RHIM) motif lies at 440-461; sequence LVFNNCSEVQIGNYNSLVAPPR. Residues 462-486 are disordered; it reads TTASSSAKYDQAQFGRGRGWQPFHK. Arg-477 is modified (omega-N-methylarginine).

This sequence belongs to the protein kinase superfamily. TKL Ser/Thr protein kinase family. In terms of assembly, interacts (via RIP homotypic interaction motif) with RIPK1 (via RIP homotypic interaction motif); this interaction induces RIPK1 phosphorylation and formation of a RIPK1-RIPK3 necrosis-inducing complex. Interacts with MLKL; the interaction is direct and triggers necroptosis. Interacts with ZBP1 (via RIP homotypic interaction motif); interaction with ZBP1 activates RIPK3, triggering necroptosis. Upon TNF-induced necrosis, the RIPK1-RIPK3 dimer further interacts with PGAM5 and MLKL; the formation of this complex leads to PGAM5 phosphorylation and increase in PGAM5 phosphatase activity. Binds TRAF2 and is recruited to the TNFR-1 signaling complex. Interacts with PYGL, GLUL and GLUD1; these interactions result in activation of these metabolic enzymes. Interacts with BIRC2/c-IAP1, BIRC3/c-IAP2 and XIAP/BIRC4. Interacts with ARHGEF2. Interacts with PELI1 (via atypical FHA domain); the phosphorylated form at Thr-187 binds preferentially to PELI1. Interacts with BUB1B, TRAF2 and STUB1. Interacts with CASP6. Component of the AIM2 PANoptosome complex, a multiprotein complex that drives inflammatory cell death (PANoptosis). As to quaternary structure, (Microbial infection) Interacts (via RIP homotypic interaction motif) with murid herpesvirus protein RIR1; this interaction disrupts RIP3-RIP1 interactions characteristic of TNF-alpha induced necroptosis, thereby suppressing this death pathway. In terms of processing, RIPK1 and RIPK3 undergo reciprocal auto- and trans-phosphorylation. Autophosphorylated following interaction with ZBP1. Phosphorylation of Ser-204 plays a role in the necroptotic function of RIPK3. Autophosphorylates at Thr-231 and Ser-232 following activation by ZBP1: phosphorylation at these sites is a hallmark of necroptosis and is required for binding MLKL. Phosphorylation at Thr-187 is important for its kinase activity, interaction with PELI1 and for its ability to mediate TNF-induced necroptosis. Polyubiquitinated with 'Lys-48' and 'Lys-63'-linked chains by BIRC2/c-IAP1 and BIRC3/c-IAP2, leading to activation of NF-kappa-B. Ubiquitinated by STUB1 leading to its subsequent proteasome-dependent degradation. In terms of tissue distribution, expressed in embryo and in adult spleen, liver, testis, heart, brain and lung.

It localises to the cytoplasm. It is found in the cytosol. The protein resides in the nucleus. The catalysed reaction is L-seryl-[protein] + ATP = O-phospho-L-seryl-[protein] + ADP + H(+). The enzyme catalyses L-threonyl-[protein] + ATP = O-phospho-L-threonyl-[protein] + ADP + H(+). Activity is stimulated by ZBP1, which senses double-stranded Z-RNA structures. RIPK3-dependent necroptosis is inhibited by RIPK1: RIPK1 prevents the ZBP1-induced activation of RIPK3 via FADD-mediated recruitment of CASP8, which cleaves RIPK1 and limits TNF-induced necroptosis. Inhibited by type II inhibitor 1-(4-fluorophenyl)-N-[3-fluoro-4-(1H-pyrrolo[2,3-b]pyridin-4-yloxy)phenyl]-2-oxo-1,2-dihydropyridine-3-carboxamide. Its function is as follows. Serine/threonine-protein kinase that activates necroptosis and apoptosis, two parallel forms of cell death. Necroptosis, a programmed cell death process in response to death-inducing TNF-alpha family members, is triggered by RIPK3 following activation by ZBP1. Activated RIPK3 forms a necrosis-inducing complex and mediates phosphorylation of MLKL, promoting MLKL localization to the plasma membrane and execution of programmed necrosis characterized by calcium influx and plasma membrane damage. In addition to TNF-induced necroptosis, necroptosis can also take place in the nucleus in response to orthomyxoviruses infection: following ZBP1 activation, which senses double-stranded Z-RNA structures, nuclear RIPK3 catalyzes phosphorylation and activation of MLKL, promoting disruption of the nuclear envelope and leakage of cellular DNA into the cytosol. Also regulates apoptosis: apoptosis depends on RIPK1, FADD and CASP8, and is independent of MLKL and RIPK3 kinase activity. Phosphorylates RIPK1: RIPK1 and RIPK3 undergo reciprocal auto- and trans-phosphorylation. In some cell types, also able to restrict viral replication by promoting cell death-independent responses. In response to flavivirus infection in neurons, promotes a cell death-independent pathway that restricts viral replication: together with ZBP1, promotes a death-independent transcriptional program that modifies the cellular metabolism via up-regulation expression of the enzyme ACOD1/IRG1 and production of the metabolite itaconate. Itaconate inhibits the activity of succinate dehydrogenase, generating a metabolic state in neurons that suppresses replication of viral genomes. RIPK3 binds to and enhances the activity of three metabolic enzymes: GLUL, GLUD1, and PYGL. These metabolic enzymes may eventually stimulate the tricarboxylic acid cycle and oxidative phosphorylation, which could result in enhanced ROS production. This chain is Receptor-interacting serine/threonine-protein kinase 3, found in Mus musculus (Mouse).